A 159-amino-acid polypeptide reads, in one-letter code: NADH-quinone oxidoreductase subunit I (159 aa).

2 consecutive 4Fe-4S ferredoxin-type domains span residues 51–80 (RRYENGVERCIACKLCEAICPAQAIVIEAE) and 90–119 (TRYDIDMTKCIYCGLCQEACPVDAIVEGPN). [4Fe-4S] cluster-binding residues include C60, C63, C66, C70, C99, C102, C105, and C109.

This sequence belongs to the complex I 23 kDa subunit family. As to quaternary structure, NDH-1 is composed of 14 different subunits. Subunits NuoA, H, J, K, L, M, N constitute the membrane sector of the complex. [4Fe-4S] cluster serves as cofactor.

It is found in the cell inner membrane. The catalysed reaction is a quinone + NADH + 5 H(+)(in) = a quinol + NAD(+) + 4 H(+)(out). Functionally, NDH-1 shuttles electrons from NADH, via FMN and iron-sulfur (Fe-S) centers, to quinones in the respiratory chain. The immediate electron acceptor for the enzyme in this species is believed to be ubiquinone. Couples the redox reaction to proton translocation (for every two electrons transferred, four hydrogen ions are translocated across the cytoplasmic membrane), and thus conserves the redox energy in a proton gradient. This chain is NADH-quinone oxidoreductase subunit I, found in Rickettsia canadensis (strain McKiel).